A 1102-amino-acid chain; its full sequence is PAN2-PAN3 deadenylation complex catalytic subunit PAN2 (1102 aa).

3 WD repeats span residues 20–59, 104–144, and 269–308; these read DYPR…RYTA, DEME…IVKQ, and NVMS…HFTD. Residues 308–445 are linker; it reads DMAIPIEMPK…STDELESLKP (138 aa). The tract at residues 423–442 is disordered; the sequence is AVPDPKVEQVPESSTDELES. One can recognise a USP domain in the interval 446-833; that stretch reads EAPPIYRNLE…LPAVLLFQVK (388 aa). The Exonuclease domain maps to 881-1054; that stretch reads VGLDTEFVSL…EDARTALKLY (174 aa). A divalent metal cation contacts are provided by D884, E886, D993, and D1046.

The protein belongs to the peptidase C19 family. PAN2 subfamily. As to quaternary structure, forms a heterotrimer with an asymmetric homodimer of the regulatory subunit PAN3 to form the poly(A)-nuclease (PAN) deadenylation complex. A divalent metal cation serves as cofactor.

Its subcellular location is the cytoplasm. The enzyme catalyses Exonucleolytic cleavage of poly(A) to 5'-AMP.. Its activity is regulated as follows. Positively regulated by the regulatory subunit PAN3. In terms of biological role, catalytic subunit of the poly(A)-nuclease (PAN) deadenylation complex, one of two cytoplasmic mRNA deadenylases involved in mRNA turnover. PAN specifically shortens poly(A) tails of RNA and the activity is stimulated by poly(A)-binding protein PAB1. PAN deadenylation is followed by rapid degradation of the shortened mRNA tails by the CCR4-NOT complex. Deadenylated mRNAs are then degraded by two alternative mechanisms, namely exosome-mediated 3'-5' exonucleolytic degradation, or deadenylation-dependent mRNA decaping and subsequent 5'-3' exonucleolytic degradation by XRN1. May also be involved in post-transcriptional maturation of mRNA poly(A) tails. This Chaetomium globosum (strain ATCC 6205 / CBS 148.51 / DSM 1962 / NBRC 6347 / NRRL 1970) (Soil fungus) protein is PAN2-PAN3 deadenylation complex catalytic subunit PAN2.